We begin with the raw amino-acid sequence, 363 residues long: Chorismate synthase (363 aa).

Position 47 (R47) interacts with NADP(+). FMN contacts are provided by residues 124 to 126 (RAS), G286, 301 to 305 (KPTAT), and R327.

The protein belongs to the chorismate synthase family. In terms of assembly, homotetramer. The cofactor is FMNH2.

The enzyme catalyses 5-O-(1-carboxyvinyl)-3-phosphoshikimate = chorismate + phosphate. Its pathway is metabolic intermediate biosynthesis; chorismate biosynthesis; chorismate from D-erythrose 4-phosphate and phosphoenolpyruvate: step 7/7. Its function is as follows. Catalyzes the anti-1,4-elimination of the C-3 phosphate and the C-6 proR hydrogen from 5-enolpyruvylshikimate-3-phosphate (EPSP) to yield chorismate, which is the branch point compound that serves as the starting substrate for the three terminal pathways of aromatic amino acid biosynthesis. This reaction introduces a second double bond into the aromatic ring system. This chain is Chorismate synthase, found in Prochlorococcus marinus (strain MIT 9211).